A 1074-amino-acid chain; its full sequence is Isoleucine--tRNA ligase (1074 aa).

Residues 50-60 (PYTSGAAHMGT) carry the 'HIGH' region motif. Residues 605 to 609 (GMSKS) carry the 'KMSKS' region motif. Lys-608 contacts ATP.

It belongs to the class-I aminoacyl-tRNA synthetase family. IleS type 2 subfamily. In terms of assembly, monomer. It depends on Zn(2+) as a cofactor.

It is found in the cytoplasm. The catalysed reaction is tRNA(Ile) + L-isoleucine + ATP = L-isoleucyl-tRNA(Ile) + AMP + diphosphate. Its function is as follows. Catalyzes the attachment of isoleucine to tRNA(Ile). As IleRS can inadvertently accommodate and process structurally similar amino acids such as valine, to avoid such errors it has two additional distinct tRNA(Ile)-dependent editing activities. One activity is designated as 'pretransfer' editing and involves the hydrolysis of activated Val-AMP. The other activity is designated 'posttransfer' editing and involves deacylation of mischarged Val-tRNA(Ile). This chain is Isoleucine--tRNA ligase, found in Haloarcula marismortui (strain ATCC 43049 / DSM 3752 / JCM 8966 / VKM B-1809) (Halobacterium marismortui).